The chain runs to 262 residues: Nodulation protein J (262 aa).

Residues 33 to 259 enclose the ABC transmembrane type-2 domain; that stretch reads ASLLGNLADP…FASIALFRRR (227 aa). Helical transmembrane passes span 37 to 57, 64 to 84, 102 to 122, 125 to 145, 149 to 169, 177 to 197, and 236 to 256; these read GNLA…GLIV, SYIA…SATF, GILF…VWAA, SVLA…ASWT, CAIP…MVVI, YFVF…GAVF, and LHVG…IALF.

This sequence belongs to the ABC-2 integral membrane protein family. Lipooligosaccharide exporter (TC 3.A.1.102) subfamily. The complex is composed of two ATP-binding proteins (NodI) and two transmembrane proteins (NodJ).

It localises to the cell inner membrane. In terms of biological role, part of the ABC transporter complex NodIJ involved in the export of the nodulation factors (Nod factors), the bacterial signal molecules that induce symbiosis and subsequent nodulation induction. Nod factors are LCO (lipo-chitin oligosaccharide), a modified beta-1,4-linked N-acetylglucosamine oligosaccharide. This subunit encodes the transporter. The sequence is that of Nodulation protein J (nodJ) from Bradyrhizobium diazoefficiens (strain JCM 10833 / BCRC 13528 / IAM 13628 / NBRC 14792 / USDA 110).